The following is a 270-amino-acid chain: Mevalonyl-coenzyme A hydratase sidH (270 aa).

The PTS1-type peroxisomal targeting signal signature appears at 268-270 (SKL).

The protein belongs to the enoyl-CoA hydratase/isomerase family.

It is found in the peroxisome. It functions in the pathway siderophore biosynthesis. Its function is as follows. Mevalonyl-coenzyme A hydratase; part of the siderophore biosynthetic pathway. Aspergillus fumigatus produces 4 types of siderophores, low-molecular-mass iron chelators, including excreted fusarinine C (FsC) and triacetylfusarinine C (TAFC) for iron uptake and intacellular ferricrocin (FC) for hyphal and hydroxyferricrocin (HFC) for conidial iron distribution and storage. TAFC consists of 3 N(2)-acetyl-N(5)-anhydromevalonyl-N(5)-hydroxyornithine residues cyclically linked by ester bonds; FC is a cyclic hexapeptide with the structure Gly-Ser-Gly-(N(5)-acetyl-N(5)-hydroxyornithine)x3. The biosynthesis of all four siderophores depends on the hydroxylation of ornithine, catalyzed by the monooxygenase sidA. Subsequently, the pathways for biosynthesis of extra- and intracellular siderophores split. For biosynthesis of extracellular siderophores, the transacylase sidF transfers anhydromevalonyl to N(5)-hydroxyornithine. The required anhydromevalonyl-CoA moiety is derived from mevalonate by CoA ligation and dehydration catalyzed by sidI and sidH respectively. The acetylation of N(5)-hydroxyornithine for FC biosynthesis involves the constitutively expressed sidL. FC is hydroxylated to HFC by an as yet uncharacterized enzyme during conidiation. Assembly of fusarinine C (FsC) and FC is catalyzed by two different nonribosomal peptide synthetases (NRPS), sidD and sidC respectively. Subsequently, sidG catalyzes N2-acetylation of FsC for forming TAFC. Both extra- and intracellular siderophores are crucial for growth during iron limitation and virulence. In Aspergillus fumigatus (strain ATCC MYA-4609 / CBS 101355 / FGSC A1100 / Af293) (Neosartorya fumigata), this protein is Mevalonyl-coenzyme A hydratase sidH.